A 382-amino-acid polypeptide reads, in one-letter code: Proton extrusion protein PxcA (382 aa).

4 helical membrane-spanning segments follow: residues 156–176, 257–277, 305–325, and 340–360; these read TLISLKVLLLLILVPLLVQQV, AVKNVIADLAATVAFVVVCVF, IILFTDIFVGFHSPEGWTVLL, and FILLFIATFPVILATIFKYWI.

Belongs to the CemA family.

Its subcellular location is the cell inner membrane. In terms of biological role, required for H(+) efflux immediately after light irradiation to form a rapid H(+) concentration gradient across the thylakoid membranes. Together with PxcL, contributes to transient H(+) uptake following dark to light transition. The polypeptide is Proton extrusion protein PxcA (Synechococcus sp. (strain WH7803)).